The chain runs to 522 residues: F-box/LRR-repeat protein 16 (522 aa).

The F-box domain occupies 38–84 (YDFTANLPDDCLAHIFQFLSAGDRKRCSLVSKRWLLVDGQNRHRLSL). LRR repeat units lie at residues 115-140 (SFSL…KLRG), 141-166 (CREI…SCGS), 169-191 (FGAK…SLKR), 266-290 (RLQV…HIVK), 291-316 (TPDC…HIDG), 319-344 (VKRI…VLIG), 348-369 (TYMS…ALCG), 370-393 (SGTI…KFCI), 395-420 (GCLI…KVKK), and 421-447 (CSLV…DDDE).

The polypeptide is F-box/LRR-repeat protein 16 (FBL16) (Arabidopsis thaliana (Mouse-ear cress)).